The following is a 172-amino-acid chain: MDRAEKREFVAWLNGAFKESGSVVVAHYTGLTVAQMSDLRSKMRDAGGSVKVAKNRLAKIALQGTESEGIADLFTGQTVVAYANDPITAPKVAVEFAKANDKLVILGGAMGATTLNADGVKSLASLPSLDELRAKLVGMIQTPAQRLAVLTSAPASQIARVIGAHARKNEAA.

This sequence belongs to the universal ribosomal protein uL10 family. Part of the ribosomal stalk of the 50S ribosomal subunit. The N-terminus interacts with L11 and the large rRNA to form the base of the stalk. The C-terminus forms an elongated spine to which L12 dimers bind in a sequential fashion forming a multimeric L10(L12)X complex.

Forms part of the ribosomal stalk, playing a central role in the interaction of the ribosome with GTP-bound translation factors. This is Large ribosomal subunit protein uL10 from Brucella suis biovar 1 (strain 1330).